A 354-amino-acid chain; its full sequence is Opsin-5 (354 aa).

Residues 1–33 (MALNHTALPQDERLPHYLRDGDPFASKLSWEAD) lie on the Extracellular side of the membrane. N-linked (GlcNAc...) asparagine glycosylation occurs at Asn-4. The chain crosses the membrane as a helical span at residues 34 to 54 (LVAGFYLTIIGILSTFGNGYV). At 55-74 (LYMSSRRKKKLRPAEIMTIN) the chain is on the cytoplasmic side. Residues 75-95 (LAVCDLGISVVGKPFTIISCF) form a helical membrane-spanning segment. The Extracellular segment spans residues 96-108 (CHRWVFGWIGCRW). An intrachain disulfide couples Cys-106 to Cys-183. A helical membrane pass occupies residues 109-129 (YGWAGFFFGCGSLITMTAVSL). At 130–150 (DRYLKICYLSYGVWLKRKHAY) the chain is on the cytoplasmic side. A helical membrane pass occupies residues 151–171 (ICLAAIWAYASFWTTMPLVGL). The Extracellular segment spans residues 172–197 (GDYVPEPFGTSCTLDWWLAQASVGGQ). Residues 198–218 (VFILNILFFCLLLPTAVIVFS) form a helical membrane-spanning segment. Residues 219–252 (YVKIIAKVKSSSKEVAHFDSRIHSSHVLEMKLTK) lie on the Cytoplasmic side of the membrane. Residues 253-273 (VAMLICAGFLIAWIPYAVVSV) form a helical membrane-spanning segment. Residues 274–288 (WSAFGRPDSIPIQLS) lie on the Extracellular side of the membrane. The helical transmembrane segment at 289 to 309 (VVPTLLAKSAAMYNPIIYQVI) threads the bilayer. Lys-296 bears the N6-(retinylidene)lysine mark. At 310-353 (DYKFACCQTGGLKATKKKSLEGFRLHTVTTVRKSSAVLEIHEEW) the chain is on the cytoplasmic side. Residues Cys-315 and Cys-316 are each lipidated (S-palmitoyl cysteine).

This sequence belongs to the G-protein coupled receptor 1 family. Opsin subfamily. Post-translationally, it is uncertain whether Cys-315 or Cys-316 is palmitoylated. As to expression, detected in brain and retina and cell lines derived from neural retina.

Its subcellular location is the cell membrane. G-protein coupled receptor which selectively activates G(i) type G proteins via ultraviolet A (UVA) light-mediated activation in the retina. Preferentially binds the chromophore 11-cis retinal and is a bistable protein that displays emission peaks at 380 nm (UVA light) and 470 nm (blue light). Required for the light-response in the inner plexiform layer, and contributes to the regulation of the light-response in the nerve fiber layer, via phosphorylated DAT/SLC6A3 dopamine uptake. Involved in local corneal and retinal circadian rhythm photoentrainment via modulation of the UVA light-induced phase-shift of the retina clock. Acts as a circadian photoreceptor in the outer ear, via modulation of circadian clock-gene expression in response to violet light during the light-to-dark transition phase and night phase of the circadian cycle. Required in the retina to negatively regulate hyaloid vessel regression during postnatal development via light-dependent OPN5-SLC32A1-DRD2-VEGFR2 signaling. Involved in the light-dependent regulation of retina and vitreous compartment dopamine levels. The chain is Opsin-5 (OPN5) from Homo sapiens (Human).